A 578-amino-acid polypeptide reads, in one-letter code: Isocitrate dehydrogenase kinase/phosphatase (578 aa).

ATP contacts are provided by residues 315-321 (APGIRGM) and lysine 336. The active site involves aspartate 371.

The protein belongs to the AceK family.

The protein localises to the cytoplasm. It carries out the reaction L-seryl-[isocitrate dehydrogenase] + ATP = O-phospho-L-seryl-[isocitrate dehydrogenase] + ADP + H(+). Functionally, bifunctional enzyme which can phosphorylate or dephosphorylate isocitrate dehydrogenase (IDH) on a specific serine residue. This is a regulatory mechanism which enables bacteria to bypass the Krebs cycle via the glyoxylate shunt in response to the source of carbon. When bacteria are grown on glucose, IDH is fully active and unphosphorylated, but when grown on acetate or ethanol, the activity of IDH declines drastically concomitant with its phosphorylation. The polypeptide is Isocitrate dehydrogenase kinase/phosphatase (Escherichia coli (strain K12 / MC4100 / BW2952)).